A 107-amino-acid chain; its full sequence is MTQPLICAYRMCFVIDKYHSIFMCANYLNVYLERSTMVFSFLTVMPGDFIKCLFLRFFVKFKLRFPNGLLNIFQKMLFNMLVQVTHELLRMRICSITNFFRVLVRLV.

Residues 37–59 (MVFSFLTVMPGDFIKCLFLRFFV) traverse the membrane as a helical segment.

It localises to the membrane. This is an uncharacterized protein from Saccharomyces cerevisiae (strain ATCC 204508 / S288c) (Baker's yeast).